Here is a 366-residue protein sequence, read N- to C-terminus: Autoinducer 2-binding periplasmic protein LuxP (366 aa).

The first 13 residues, 1–13 (MKKILLTCLLASA), serve as a signal peptide directing secretion.

The protein belongs to the bacterial solute-binding protein 2 family.

It is found in the periplasm. Its function is as follows. Binds to an autoinducer molecule. This complex then interacts with the LuxQ sensor protein. The polypeptide is Autoinducer 2-binding periplasmic protein LuxP (luxP) (Vibrio vulnificus (strain CMCP6)).